The following is a 446-amino-acid chain: Maltoporin (446 aa).

Positions 1–25 (MMITLRKLPLAVAVAAGVMSAQAMA) are cleaved as a signal peptide.

It belongs to the porin LamB (TC 1.B.3) family. As to quaternary structure, homotrimer formed of three 18-stranded antiparallel beta-barrels, containing three independent channels.

The protein localises to the cell outer membrane. It catalyses the reaction beta-maltose(in) = beta-maltose(out). Functionally, involved in the transport of maltose and maltodextrins. The polypeptide is Maltoporin (Escherichia coli O6:K15:H31 (strain 536 / UPEC)).